A 286-amino-acid polypeptide reads, in one-letter code: Acetyl-coenzyme A carboxylase carboxyl transferase subunit beta (286 aa).

Residues 27–286 (LMTKCPKCKL…HSEETNHATI (260 aa)) form the CoA carboxyltransferase N-terminal domain. Cys31, Cys34, Cys50, and Cys52 together coordinate Zn(2+). The C4-type zinc finger occupies 31–52 (CPKCKLIQYTKQLEANLKVCVC).

Belongs to the AccD/PCCB family. As to quaternary structure, acetyl-CoA carboxylase is a heterohexamer composed of biotin carboxyl carrier protein (AccB), biotin carboxylase (AccC) and two subunits each of ACCase subunit alpha (AccA) and ACCase subunit beta (AccD). The cofactor is Zn(2+).

It localises to the cytoplasm. The enzyme catalyses N(6)-carboxybiotinyl-L-lysyl-[protein] + acetyl-CoA = N(6)-biotinyl-L-lysyl-[protein] + malonyl-CoA. The protein operates within lipid metabolism; malonyl-CoA biosynthesis; malonyl-CoA from acetyl-CoA: step 1/1. Functionally, component of the acetyl coenzyme A carboxylase (ACC) complex. Biotin carboxylase (BC) catalyzes the carboxylation of biotin on its carrier protein (BCCP) and then the CO(2) group is transferred by the transcarboxylase to acetyl-CoA to form malonyl-CoA. This chain is Acetyl-coenzyme A carboxylase carboxyl transferase subunit beta, found in Exiguobacterium sibiricum (strain DSM 17290 / CCUG 55495 / CIP 109462 / JCM 13490 / 255-15).